The chain runs to 230 residues: Flagellar L-ring protein (230 aa).

The first 21 residues, 1-21 (MMLKTVLRLPVCAALLALAAG), serve as a signal peptide directing secretion. Cysteine 22 is lipidated: N-palmitoyl cysteine. The S-diacylglycerol cysteine moiety is linked to residue cysteine 22. The interval 34–53 (PLTAPPPPPPQPSARPNGSI) is disordered. The span at 36–46 (TAPPPPPPQPS) shows a compositional bias: pro residues.

The protein belongs to the FlgH family. As to quaternary structure, the basal body constitutes a major portion of the flagellar organelle and consists of four rings (L,P,S, and M) mounted on a central rod.

The protein localises to the cell outer membrane. Its subcellular location is the bacterial flagellum basal body. Its function is as follows. Assembles around the rod to form the L-ring and probably protects the motor/basal body from shearing forces during rotation. The sequence is that of Flagellar L-ring protein from Bordetella parapertussis (strain 12822 / ATCC BAA-587 / NCTC 13253).